A 122-amino-acid chain; its full sequence is uncharacterized protein (122 aa).

Transmembrane regions (helical) follow at residues 9 to 29 (VATV…STWV) and 60 to 80 (LFSF…CLIM).

The protein resides in the cytoplasm. It localises to the membrane. This is an uncharacterized protein from Schizosaccharomyces pombe (strain 972 / ATCC 24843) (Fission yeast).